The sequence spans 289 residues: Ribosomal RNA small subunit methyltransferase A (289 aa).

S-adenosyl-L-methionine-binding residues include Asn21, Leu23, Gly48, Glu69, Asp94, and Asn120.

The protein belongs to the class I-like SAM-binding methyltransferase superfamily. rRNA adenine N(6)-methyltransferase family. RsmA subfamily.

It is found in the cytoplasm. It carries out the reaction adenosine(1518)/adenosine(1519) in 16S rRNA + 4 S-adenosyl-L-methionine = N(6)-dimethyladenosine(1518)/N(6)-dimethyladenosine(1519) in 16S rRNA + 4 S-adenosyl-L-homocysteine + 4 H(+). Its function is as follows. Specifically dimethylates two adjacent adenosines (A1518 and A1519) in the loop of a conserved hairpin near the 3'-end of 16S rRNA in the 30S particle. May play a critical role in biogenesis of 30S subunits. The polypeptide is Ribosomal RNA small subunit methyltransferase A (Haemophilus ducreyi (strain 35000HP / ATCC 700724)).